A 351-amino-acid chain; its full sequence is Methylthioribose-1-phosphate isomerase (351 aa).

Asp244 serves as the catalytic Proton donor.

Belongs to the eIF-2B alpha/beta/delta subunits family. MtnA subfamily.

It localises to the cytoplasm. The protein localises to the nucleus. The enzyme catalyses 5-(methylsulfanyl)-alpha-D-ribose 1-phosphate = 5-(methylsulfanyl)-D-ribulose 1-phosphate. It participates in amino-acid biosynthesis; L-methionine biosynthesis via salvage pathway; L-methionine from S-methyl-5-thio-alpha-D-ribose 1-phosphate: step 1/6. Its function is as follows. Catalyzes the interconversion of methylthioribose-1-phosphate (MTR-1-P) into methylthioribulose-1-phosphate (MTRu-1-P). The polypeptide is Methylthioribose-1-phosphate isomerase (Anopheles gambiae (African malaria mosquito)).